A 417-amino-acid polypeptide reads, in one-letter code: Histidinol-phosphate aminotransferase 1, chloroplastic (417 aa).

A chloroplast-targeting transit peptide spans 1-40 (MGVINVQGSPSFSIHSSESNLRKSRALKKPFCSIRNRVYC). An N-acetylalanine modification is found at A41. The residue at position 277 (K277) is an N6-(pyridoxal phosphate)lysine.

It belongs to the class-II pyridoxal-phosphate-dependent aminotransferase family. Histidinol-phosphate aminotransferase subfamily. Homodimer. It depends on pyridoxal 5'-phosphate as a cofactor. In terms of tissue distribution, expressed in both vegetative and reproductive tissues.

It localises to the plastid. Its subcellular location is the chloroplast. The catalysed reaction is L-histidinol phosphate + 2-oxoglutarate = 3-(imidazol-4-yl)-2-oxopropyl phosphate + L-glutamate. It functions in the pathway amino-acid biosynthesis; L-histidine biosynthesis; L-histidine from 5-phospho-alpha-D-ribose 1-diphosphate: step 7/9. This chain is Histidinol-phosphate aminotransferase 1, chloroplastic (HISN6A), found in Arabidopsis thaliana (Mouse-ear cress).